The following is a 175-amino-acid chain: Glutamyl-tRNA(Gln) amidotransferase subunit F, mitochondrial (175 aa).

The N-terminal 19 residues, 1 to 19 (MLKVSARHAPVLRLPRRFY), are a transit peptide targeting the mitochondrion.

The protein belongs to the GatF family. Subunit of the heterotrimeric GatFAB amidotransferase (AdT) complex, composed of A, B and F subunits.

The protein resides in the mitochondrion inner membrane. The catalysed reaction is L-glutamyl-tRNA(Gln) + L-glutamine + ATP + H2O = L-glutaminyl-tRNA(Gln) + L-glutamate + ADP + phosphate + H(+). In terms of biological role, allows the formation of correctly charged Gln-tRNA(Gln) through the transamidation of misacylated Glu-tRNA(Gln) in the mitochondria. The reaction takes place in the presence of glutamine and ATP through an activated gamma-phospho-Glu-tRNA(Gln). Required for proper protein synthesis within the mitochondrion. In Lachancea thermotolerans (strain ATCC 56472 / CBS 6340 / NRRL Y-8284) (Yeast), this protein is Glutamyl-tRNA(Gln) amidotransferase subunit F, mitochondrial.